The primary structure comprises 485 residues: MNEYPKKRKRKTLHPSRYSDSSGISRIADGFNGIFSDHCYSVCSMRQPDLKYFDNKDDDSDTETSNELPKFTDGIKARNRNQNYLVPSPVLRILDHTAFPTEKSADIEICDEDCDSPESVHQQTQEESPIEVHTAEDVPIAAEVHAISEDYDIETENNSSESLQDQTDEEPPAKLCKIVDKSQALNVTAQQKWPLLRANSSGLYKCELCEFNSKYFSDLKQHMILKHKRTDSNVCRVCKESFSTNMLLIEHAKLHEEDPYICKYCDYKTVIFENLSQHIADTHFSDHLYWCEQCDVQFSSSSELYLHFQEHSCDEQYLCQFCEHETNDPEDLHSHVVNEHACKLIELSDKYNNGEHGQYSLLSKITFDKCKNFFVCQVCGFRSRLHTNVNRHVAIEHTKIFPHVCDDCGKGFSSMLEYCKHLNSHLSEGIYLCQYCEYSTGQIEDLKIHLDFKHSADLPHKCSDCLMRFGNERELISHLPVHETT.

Positions 1 to 14 are enriched in basic residues; the sequence is MNEYPKKRKRKTLH. Positions 1–20 are disordered; the sequence is MNEYPKKRKRKTLHPSRYSD. Ser60 is subject to Phosphoserine. A Glycyl lysine isopeptide (Lys-Gly) (interchain with G-Cter in SUMO2) cross-link involves residue Lys76. Residue Ser88 is modified to Phosphoserine. Residues Lys177, Lys181, and Lys226 each participate in a glycyl lysine isopeptide (Lys-Gly) (interchain with G-Cter in SUMO2) cross-link. 8 C2H2-type zinc fingers span residues 204–227, 233–255, 260–283, 289–311, 374–397, 403–425, 431–454, and 460–482; these read YKCE…ILKH, NVCR…AKLH, YICK…ADTH, YWCE…FQEH, FVCQ…AIEH, HVCD…LNSH, YLCQ…DFKH, and HKCS…LPVH. The interaction with CTNNA2 stretch occupies residues 371-455; the sequence is KNFFVCQVCG…LKIHLDFKHS (85 aa).

It belongs to the krueppel C2H2-type zinc-finger protein family. As to quaternary structure, interacts with CTNNA2.

Its subcellular location is the nucleus. Functionally, binds DNA and may function as a transcriptional repressor. This Bos taurus (Bovine) protein is Zinc finger protein 639 (ZNF639).